The following is a 209-amino-acid chain: CASP-like protein 1A1 (209 aa).

Residues 1–26 (MEEAKHNEAEEAQGIEAREAKQIEAG) form a disordered region. Residues 1–49 (MEEAKHNEAEEAQGIEAREAKQIEAGETSRSSRKLITFEPKLVINKGIS) are Cytoplasmic-facing. A helical transmembrane segment spans residues 50-70 (VLGFVLRLFAVFGTIGSALAM). At 71-95 (GTTHESVVSLSQLVLLKVKYSDLPT) the chain is on the extracellular side. The chain crosses the membrane as a helical span at residues 96–116 (LMFFVVANAISGGYLVLSLPV). The Cytoplasmic segment spans residues 117-130 (SIFHIFSTQAKTSR). The helical transmembrane segment at 131–151 (IILLVVDTVMLALVSSGASAA) threads the bilayer. The Extracellular portion of the chain corresponds to 152-183 (TATVYLAHEGNTTANWPPICQQFDGFCERISG). The N-linked (GlcNAc...) asparagine glycan is linked to asparagine 162. Residues 184-204 (SLIGSFCAVILLMLIVINSAI) traverse the membrane as a helical segment. Topologically, residues 205–209 (SLSRH) are cytoplasmic.

This sequence belongs to the Casparian strip membrane proteins (CASP) family. In terms of assembly, homodimer and heterodimers. As to expression, expressed in the root endodermis.

The protein resides in the cell membrane. The chain is CASP-like protein 1A1 from Arabidopsis thaliana (Mouse-ear cress).